Consider the following 93-residue polypeptide: uncharacterized protein (93 aa).

Residues 73–93 (KWTVSGPVKQDTGKTDPAEKN) form a disordered region. The segment covering 83-93 (DTGKTDPAEKN) has biased composition (basic and acidic residues).

This is an uncharacterized protein from Rhodobacter capsulatus (Rhodopseudomonas capsulata).